The sequence spans 41 residues: Photosystem I reaction center subunit IX (41 aa).

Residues 7 to 27 traverse the membrane as a helical segment; sequence YLSTAPVVALIWFTFTAGLLI.

The protein belongs to the PsaJ family.

It is found in the plastid. Its subcellular location is the chloroplast thylakoid membrane. In terms of biological role, may help in the organization of the PsaE and PsaF subunits. The polypeptide is Photosystem I reaction center subunit IX (Pleurastrum terricola (Filamentous green alga)).